The sequence spans 131 residues: Profilin-1 (131 aa).

The protein belongs to the profilin family. In terms of assembly, occurs in many kinds of cells as a complex with monomeric actin in a 1:1 ratio.

The protein resides in the cytoplasm. It localises to the cytoskeleton. Its function is as follows. Binds to actin and affects the structure of the cytoskeleton. At high concentrations, profilin prevents the polymerization of actin, whereas it enhances it at low concentrations. By binding to PIP2, it inhibits the formation of IP3 and DG. This chain is Profilin-1 (PRO1), found in Hordeum vulgare (Barley).